The primary structure comprises 494 residues: Glycerol kinase (494 aa).

Threonine 13 lines the ADP pocket. ATP-binding residues include threonine 13, threonine 14, and serine 15. Threonine 13 contributes to the sn-glycerol 3-phosphate binding site. Arginine 17 serves as a coordination point for ADP. Sn-glycerol 3-phosphate is bound by residues arginine 83, glutamate 84, tyrosine 135, and aspartate 244. Residues arginine 83, glutamate 84, tyrosine 135, aspartate 244, and glutamine 245 each coordinate glycerol. Residues threonine 266 and glycine 309 each coordinate ADP. Residues threonine 266, glycine 309, glutamine 313, and glycine 410 each coordinate ATP. Glycine 410 and asparagine 414 together coordinate ADP.

It belongs to the FGGY kinase family.

It catalyses the reaction glycerol + ATP = sn-glycerol 3-phosphate + ADP + H(+). Its pathway is polyol metabolism; glycerol degradation via glycerol kinase pathway; sn-glycerol 3-phosphate from glycerol: step 1/1. Its activity is regulated as follows. Inhibited by fructose 1,6-bisphosphate (FBP). Its function is as follows. Key enzyme in the regulation of glycerol uptake and metabolism. Catalyzes the phosphorylation of glycerol to yield sn-glycerol 3-phosphate. In Shewanella baltica (strain OS185), this protein is Glycerol kinase.